The following is a 385-amino-acid chain: MMMMALSKTFGQKPVKFQLEDDGEFYMIGSEVGNYLRMFRGSLYKRYPSLWRRLATVEERKKIVASSHGKKTKPNTKDHGYTTLATSVTLLKASEVEEILDGNDEKYKAVSISTEPPTYLREQKAKRNSQWVPTLPNSSHHLDAVPCSTTINRNRMGRDKKRTFPLCFDDHDPAVIHENASQPEVLVPIRLDMEIDGQKLRDAFTWNMNEKLMTPEMFSEILCDDLDLNPLTFVPAIASAIRQQIESYPTDSILEDQSDQRVIIKLNIHVGNISLVDQFEWDMSEKENSPEKFALKLCSELGLGGEFVTTIAYSIRGQLSWHQKTYAFSENPLPTVEIAIRNTGDADQWCPLLETLTDAEMEKKIRDQDRNTRRMRRLANTAPAW.

A DNA-binding region spans residues 1–113; that stretch reads MMMMALSKTF…DEKYKAVSIS (113 aa). Glycyl lysine isopeptide (Lys-Gly) (interchain with G-Cter in SUMO2) cross-links involve residues lysine 106, lysine 108, and lysine 124. At serine 129 the chain carries Phosphoserine. Lysine 161 participates in a covalent cross-link: Glycyl lysine isopeptide (Lys-Gly) (interchain with G-Cter in SUMO2). An HIV-1 integrase-binding region spans residues 183–243; sequence PEVLVPIRLD…VPAIASAIRQ (61 aa). 2 tandem repeats follow at residues 186–245 and 259–319. The interval 186 to 245 is MYC-binding; the sequence is LVPIRLDMEIDGQKLRDAFTWNMNEKLMTPEMFSEILCDDLDLNPLTFVPAIASAIRQQI. The tract at residues 186 to 319 is 2 X approximate tandem repeats; the sequence is LVPIRLDMEI…TIAYSIRGQL (134 aa). Residues 304 to 318 are interaction with PPP1R15A; the sequence is GGEFVTTIAYSIRGQ.

Belongs to the SNF5 family. As to quaternary structure, component of the multiprotein chromatin-remodeling complexes SWI/SNF: SWI/SNF-A (BAF), SWI/SNF-B (PBAF) and related complexes. The canonical complex contains a catalytic subunit (either SMARCA4/BRG1/BAF190A or SMARCA2/BRM/BAF190B) and at least SMARCE1, ACTL6A/BAF53, SMARCC1/BAF155, SMARCC2/BAF170, and SMARCB1/SNF5/BAF47. Other subunits specific to each of the complexes may also be present permitting several possible combinations developmentally and tissue specific. Component of the BAF complex, which includes at least actin (ACTB), ARID1A/BAF250A, ARID1B/BAF250B, SMARCA2/BRM, SMARCA4/BRG1/BAF190A, ACTL6A/BAF53, ACTL6B/BAF53B, SMARCE1/BAF57 SMARCC1/BAF155, SMARCC2/BAF170, SMARCB1/SNF5/INI1, and one or more SMARCD1/BAF60A, SMARCD2/BAF60B, or SMARCD3/BAF60C. In muscle cells, the BAF complex also contains DPF3. Component of neural progenitors-specific chromatin remodeling complex (npBAF complex) composed of at least, ARID1A/BAF250A or ARID1B/BAF250B, SMARCD1/BAF60A, SMARCD3/BAF60C, SMARCA2/BRM/BAF190B, SMARCA4/BRG1/BAF190A, SMARCB1/BAF47, SMARCC1/BAF155, SMARCE1/BAF57, SMARCC2/BAF170, PHF10/BAF45A, ACTL6A/BAF53A and actin. Component of neuron-specific chromatin remodeling complex (nBAF complex) composed of at least, ARID1A/BAF250A or ARID1B/BAF250B, SMARCD1/BAF60A, SMARCD3/BAF60C, SMARCA2/BRM/BAF190B, SMARCA4/BRG1/BAF190A, SMARCB1/BAF47, SMARCC1/BAF155, SMARCE1/BAF57, SMARCC2/BAF170, DPF1/BAF45B, DPF3/BAF45C, ACTL6B/BAF53B and actin. Component of the SWI/SNF-B (PBAF) chromatin remodeling complex, at least composed of SMARCA4/BRG1, SMARCB1/BAF47/SNF5, ACTL6A/BAF53A or ACTL6B/BAF53B, SMARCE1/BAF57, SMARCD1/BAF60A, SMARCD2/BAF60B, perhaps SMARCD3/BAF60C, SMARCC1/BAF155, SMARCC2/BAF170, PBRM1/BAF180, ARID2/BAF200 and actin. Binds to double-stranded DNA. Interacts with CEBPB (when not methylated). Interacts with PIH1D1. Interacts with MYK and MAEL. Interacts with PPP1R15A. Interacts with DPF2. Interacts with YWHAZ. Interacts with ERCC6. Interacts with FOS, FOSB isoform 1 and 2, FOSL1 and FOSL2. In terms of assembly, (Microbial infection) Binds tightly to the human immunodeficiency virus-type 1 (HIV-1) integrase in vitro and stimulates its DNA-joining activity. Interacts with human papillomavirus 18 E1 protein to stimulate its viral replication. Interacts with Epstein-Barr virus protein EBNA-2.

The protein resides in the nucleus. Functionally, core component of the BAF (hSWI/SNF) complex. This ATP-dependent chromatin-remodeling complex plays important roles in cell proliferation and differentiation, in cellular antiviral activities and inhibition of tumor formation. The BAF complex is able to create a stable, altered form of chromatin that constrains fewer negative supercoils than normal. This change in supercoiling would be due to the conversion of up to one-half of the nucleosomes on polynucleosomal arrays into asymmetric structures, termed altosomes, each composed of 2 histones octamers. Stimulates in vitro the remodeling activity of SMARCA4/BRG1/BAF190A. Involved in activation of CSF1 promoter. Belongs to the neural progenitors-specific chromatin remodeling complex (npBAF complex) and the neuron-specific chromatin remodeling complex (nBAF complex). During neural development a switch from a stem/progenitor to a postmitotic chromatin remodeling mechanism occurs as neurons exit the cell cycle and become committed to their adult state. The transition from proliferating neural stem/progenitor cells to postmitotic neurons requires a switch in subunit composition of the npBAF and nBAF complexes. As neural progenitors exit mitosis and differentiate into neurons, npBAF complexes which contain ACTL6A/BAF53A and PHF10/BAF45A, are exchanged for homologous alternative ACTL6B/BAF53B and DPF1/BAF45B or DPF3/BAF45C subunits in neuron-specific complexes (nBAF). The npBAF complex is essential for the self-renewal/proliferative capacity of the multipotent neural stem cells. The nBAF complex along with CREST plays a role regulating the activity of genes essential for dendrite growth. Plays a key role in cell-cycle control and causes cell cycle arrest in G0/G1. The polypeptide is SWI/SNF-related matrix-associated actin-dependent regulator of chromatin subfamily B member 1 (SMARCB1) (Homo sapiens (Human)).